We begin with the raw amino-acid sequence, 79 residues long: RNA-binding protein Hfq (79 aa).

The 61-residue stretch at 10–70 (DAFLNHVRKT…ISTIMPAQPI (61 aa)) folds into the Sm domain.

This sequence belongs to the Hfq family. Homohexamer.

In terms of biological role, RNA chaperone that binds small regulatory RNA (sRNAs) and mRNAs to facilitate mRNA translational regulation in response to envelope stress, environmental stress and changes in metabolite concentrations. Also binds with high specificity to tRNAs. In Ruegeria sp. (strain TM1040) (Silicibacter sp.), this protein is RNA-binding protein Hfq.